A 278-amino-acid polypeptide reads, in one-letter code: Large ribosomal subunit protein uL2 (278 aa).

The segment covering 212 to 221 has biased composition (basic residues); it reads NRWLGKRPHN. A disordered region spans residues 212–278; it reads NRWLGKRPHN…ILSSRHNRKK (67 aa).

The protein belongs to the universal ribosomal protein uL2 family. In terms of assembly, part of the 50S ribosomal subunit. Forms a bridge to the 30S subunit in the 70S ribosome.

Functionally, one of the primary rRNA binding proteins. Required for association of the 30S and 50S subunits to form the 70S ribosome, for tRNA binding and peptide bond formation. It has been suggested to have peptidyltransferase activity; this is somewhat controversial. Makes several contacts with the 16S rRNA in the 70S ribosome. This chain is Large ribosomal subunit protein uL2, found in Methylorubrum populi (strain ATCC BAA-705 / NCIMB 13946 / BJ001) (Methylobacterium populi).